Here is an 807-residue protein sequence, read N- to C-terminus: Ribosomal RNA large subunit methyltransferase K/L (807 aa).

The THUMP domain occupies 67–182 (QIYKICLWSR…EKQAEIFLDL (116 aa)). Polar residues predominate over residues 548–560 (NTQYGNPEASAQS). Residues 548-602 (NTQYGNPEASAQSKESKNAPEPKKDNRNRYKGNKFQQAREEAKRQEAQRLAQKKR) are disordered. Composition is skewed to basic and acidic residues over residues 561–575 (KESK…DNRN) and 584–594 (QAREEAKRQEA).

It belongs to the methyltransferase superfamily. RlmKL family.

The protein resides in the cytoplasm. It catalyses the reaction guanosine(2445) in 23S rRNA + S-adenosyl-L-methionine = N(2)-methylguanosine(2445) in 23S rRNA + S-adenosyl-L-homocysteine + H(+). The catalysed reaction is guanosine(2069) in 23S rRNA + S-adenosyl-L-methionine = N(2)-methylguanosine(2069) in 23S rRNA + S-adenosyl-L-homocysteine + H(+). Its function is as follows. Specifically methylates the guanine in position 2445 (m2G2445) and the guanine in position 2069 (m7G2069) of 23S rRNA. The sequence is that of Ribosomal RNA large subunit methyltransferase K/L from Psychrobacter sp. (strain PRwf-1).